The following is a 466-amino-acid chain: Histidine--tRNA ligase (466 aa).

Belongs to the class-II aminoacyl-tRNA synthetase family. In terms of assembly, homodimer.

The protein localises to the cytoplasm. The catalysed reaction is tRNA(His) + L-histidine + ATP = L-histidyl-tRNA(His) + AMP + diphosphate + H(+). The protein is Histidine--tRNA ligase of Xylella fastidiosa (strain M12).